The primary structure comprises 416 residues: CinA-like protein (416 aa).

This sequence belongs to the CinA family.

The protein is CinA-like protein of Rippkaea orientalis (strain PCC 8801 / RF-1) (Cyanothece sp. (strain PCC 8801)).